Here is a 431-residue protein sequence, read N- to C-terminus: Glutamate-1-semialdehyde 2,1-aminomutase (431 aa).

At K265 the chain carries N6-(pyridoxal phosphate)lysine.

The protein belongs to the class-III pyridoxal-phosphate-dependent aminotransferase family. HemL subfamily. In terms of assembly, homodimer. Pyridoxal 5'-phosphate is required as a cofactor.

It localises to the cytoplasm. It catalyses the reaction (S)-4-amino-5-oxopentanoate = 5-aminolevulinate. It participates in porphyrin-containing compound metabolism; protoporphyrin-IX biosynthesis; 5-aminolevulinate from L-glutamyl-tRNA(Glu): step 2/2. The chain is Glutamate-1-semialdehyde 2,1-aminomutase from Pseudoalteromonas atlantica (strain T6c / ATCC BAA-1087).